Reading from the N-terminus, the 210-residue chain is LexA repressor (210 aa).

The segment at residues 30 to 50 (RVEIAREIGFKSPNAAEEHLK) is a DNA-binding region (H-T-H motif). Active-site for autocatalytic cleavage activity residues include S127 and K164.

This sequence belongs to the peptidase S24 family. Homodimer.

The enzyme catalyses Hydrolysis of Ala-|-Gly bond in repressor LexA.. Its function is as follows. Represses a number of genes involved in the response to DNA damage (SOS response), including recA and lexA. In the presence of single-stranded DNA, RecA interacts with LexA causing an autocatalytic cleavage which disrupts the DNA-binding part of LexA, leading to derepression of the SOS regulon and eventually DNA repair. The polypeptide is LexA repressor (Actinobacillus pleuropneumoniae serotype 7 (strain AP76)).